The primary structure comprises 362 residues: Histidinol-phosphate aminotransferase (362 aa).

An N6-(pyridoxal phosphate)lysine modification is found at Lys-222.

It belongs to the class-II pyridoxal-phosphate-dependent aminotransferase family. Histidinol-phosphate aminotransferase subfamily. As to quaternary structure, homodimer. Pyridoxal 5'-phosphate is required as a cofactor.

It catalyses the reaction L-histidinol phosphate + 2-oxoglutarate = 3-(imidazol-4-yl)-2-oxopropyl phosphate + L-glutamate. It functions in the pathway amino-acid biosynthesis; L-histidine biosynthesis; L-histidine from 5-phospho-alpha-D-ribose 1-diphosphate: step 7/9. The polypeptide is Histidinol-phosphate aminotransferase (Shewanella amazonensis (strain ATCC BAA-1098 / SB2B)).